The sequence spans 214 residues: Sugar transporter SWEET1 (214 aa).

The next 7 membrane-spanning stretches (helical) occupy residues 3-23 (WMWL…SSGL), 38-58 (IQFL…YYGY), 65-85 (LIIV…AYIL), 93-113 (VVSQ…YFTL), 125-145 (LGLF…ADLA), 157-177 (SFPL…YGWV), and 181-201 (LYIT…FWLF). A MtN3/slv 1 domain is found at 6 to 89 (LLSGACIVFT…MAAYILYSLE (84 aa)). Residues 124 to 207 (QLGLFCSIFT…FWLFSRYPPD (84 aa)) enclose the MtN3/slv 2 domain.

It belongs to the SWEET sugar transporter family.

It localises to the golgi apparatus membrane. The protein localises to the cell membrane. Mediates sugar transport across membranes. The chain is Sugar transporter SWEET1 (slc50a1) from Xenopus tropicalis (Western clawed frog).